The chain runs to 219 residues: MYSLVFVILMCIPFSFQTVYDDKSVCDSDNKEYMGIEVYVEATLDEPLRQTTCESKIHKYGASVSNGGLNISVDLLNCFLNFHTVGVYTNRDTVYAKFASLDPWTTEPINSMTHDDLVKLTEECIVDIYLKCEVDKTKDFMKTNGNRLKPRDFKTVPPSNVGSMIELQSDYCVNDVTTYVKIYDECGNIKQHSIPTLRDYFTTKNGQPRKILKKKFDNC.

Positions 1 to 16 are cleaved as a signal peptide; the sequence is MYSLVFVILMCIPFSF. A glycan (N-linked (GlcNAc...) asparagine; by host) is linked at N70.

This sequence belongs to the orthopoxvirus OPG170 family.

It is found in the secreted. May interact with several cellular chemokines to interfere with chemokine-glycosaminoglycan (GAG) interactions at the cell surface to alter chemotaxis of nearby responsive cells. This Bos taurus (Bovine) protein is Protein OPG170 (OPG170).